The chain runs to 537 residues: CTP synthase (537 aa).

The amidoligase domain stretch occupies residues 1–267 (MTKYIFVTGG…DQIVLDHFDV (267 aa)). Ser-13 provides a ligand contact to CTP. Residue Ser-13 coordinates UTP. An ATP-binding site is contributed by 14–19 (SIGKGI). Tyr-54 serves as a coordination point for L-glutamine. Asp-71 contributes to the ATP binding site. Residues Asp-71 and Glu-141 each coordinate Mg(2+). CTP is bound by residues 148–150 (DIE), 188–193 (KTKPTQ), and Lys-224. Residues 188–193 (KTKPTQ) and Lys-224 each bind UTP. The 244-residue stretch at 292 to 535 (KIALVGKYVA…IDAANQTGKV (244 aa)) folds into the Glutamine amidotransferase type-1 domain. Gly-354 is an L-glutamine binding site. The Nucleophile; for glutamine hydrolysis role is filled by Cys-381. L-glutamine is bound by residues 382–385 (LGMQ), Glu-405, and Arg-463. Catalysis depends on residues His-508 and Glu-510.

This sequence belongs to the CTP synthase family. Homotetramer.

It catalyses the reaction UTP + L-glutamine + ATP + H2O = CTP + L-glutamate + ADP + phosphate + 2 H(+). The catalysed reaction is L-glutamine + H2O = L-glutamate + NH4(+). It carries out the reaction UTP + NH4(+) + ATP = CTP + ADP + phosphate + 2 H(+). It participates in pyrimidine metabolism; CTP biosynthesis via de novo pathway; CTP from UDP: step 2/2. Its activity is regulated as follows. Allosterically activated by GTP, when glutamine is the substrate; GTP has no effect on the reaction when ammonia is the substrate. The allosteric effector GTP functions by stabilizing the protein conformation that binds the tetrahedral intermediate(s) formed during glutamine hydrolysis. Inhibited by the product CTP, via allosteric rather than competitive inhibition. In terms of biological role, catalyzes the ATP-dependent amination of UTP to CTP with either L-glutamine or ammonia as the source of nitrogen. Regulates intracellular CTP levels through interactions with the four ribonucleotide triphosphates. This is CTP synthase from Lactiplantibacillus plantarum (strain ATCC BAA-793 / NCIMB 8826 / WCFS1) (Lactobacillus plantarum).